The following is a 608-amino-acid chain: Glutamyl-tRNA(Gln) amidotransferase subunit E (608 aa).

A disordered region spans residues 402-422 (EETRGANPDGTTRFLRPRPGA).

Belongs to the GatB/GatE family. GatE subfamily. Heterodimer of GatD and GatE.

It carries out the reaction L-glutamyl-tRNA(Gln) + L-glutamine + ATP + H2O = L-glutaminyl-tRNA(Gln) + L-glutamate + ADP + phosphate + H(+). Functionally, allows the formation of correctly charged Gln-tRNA(Gln) through the transamidation of misacylated Glu-tRNA(Gln) in organisms which lack glutaminyl-tRNA synthetase. The reaction takes place in the presence of glutamine and ATP through an activated gamma-phospho-Glu-tRNA(Gln). The GatDE system is specific for glutamate and does not act on aspartate. In Pyrobaculum calidifontis (strain DSM 21063 / JCM 11548 / VA1), this protein is Glutamyl-tRNA(Gln) amidotransferase subunit E.